The sequence spans 173 residues: Co-chaperone protein HscB homolog (173 aa).

One can recognise a J domain in the interval 5–77 (CHFALFDLQP…PRRARYLLAI (73 aa)).

It belongs to the HscB family. Interacts with HscA and stimulates its ATPase activity.

Its function is as follows. Co-chaperone involved in the maturation of iron-sulfur cluster-containing proteins. Seems to help targeting proteins to be folded toward HscA. The chain is Co-chaperone protein HscB homolog from Pseudomonas putida (strain W619).